Here is a 773-residue protein sequence, read N- to C-terminus: Tyrosine kinase receptor Cad96Ca (773 aa).

The signal sequence occupies residues 1–48 (MVYHHHNHESRIIHCRKQLTSWRRRSLLLTIIVVTATVVSLISQEAEA). Topologically, residues 49–315 (HNQNAPPILY…ITIFSLKSGT (267 aa)) are extracellular. The region spanning 58–172 (YVRERNWRIS…ENSSGYRPQT (115 aa)) is the Cadherin domain. N-linked (GlcNAc...) asparagine glycans are attached at residues N126, N164, and N180. Residues 196–302 (SIRNGLPNSR…TPSGGHHNNS (107 aa)) are disordered. The span at 209–235 (WYPPVPQNNIFGPPPFGNNYPPPPPNI) shows a compositional bias: pro residues. Residues 243-253 (SGEEEQPDEEV) are compositionally biased toward acidic residues. 2 stretches are compositionally biased toward polar residues: residues 254–283 (TPTT…STRV) and 290–302 (ETTT…HNNS). N-linked (GlcNAc...) asparagine glycans are attached at residues N278, N279, N300, and N301. The helical transmembrane segment at 316–336 (IPIVVTVGGFFVAIAVLLAYL) threads the bilayer. At 337–773 (CRRRLCAISR…NIVSLSGEKL (437 aa)) the chain is on the cytoplasmic side. Disordered regions lie at residues 352–373 (KEKE…LTDD) and 411–447 (TGVT…AGSS). Polar residues predominate over residues 361–373 (SNQSQLSSTLTDD). Residues 411-433 (TGVTNGGVSSPGVPSPGTGEPGS) show a composition bias toward low complexity. The 280-residue stretch at 470–749 (LKFFNILGEG…MLDKLLHTEM (280 aa)) folds into the Protein kinase domain. ATP is bound by residues 476 to 484 (LGEGAFGQV) and K504. D610 serves as the catalytic Proton acceptor.

The protein belongs to the protein kinase superfamily. Tyr protein kinase family. Fibroblast growth factor receptor subfamily.

It localises to the membrane. It carries out the reaction L-tyrosyl-[protein] + ATP = O-phospho-L-tyrosyl-[protein] + ADP + H(+). This chain is Tyrosine kinase receptor Cad96Ca (Cad96Ca), found in Drosophila melanogaster (Fruit fly).